A 249-amino-acid chain; its full sequence is Ubiquinone/menaquinone biosynthesis C-methyltransferase UbiE (249 aa).

Residues T72, D93, and 121 to 122 (DA) each bind S-adenosyl-L-methionine.

It belongs to the class I-like SAM-binding methyltransferase superfamily. MenG/UbiE family.

It catalyses the reaction a 2-demethylmenaquinol + S-adenosyl-L-methionine = a menaquinol + S-adenosyl-L-homocysteine + H(+). The enzyme catalyses a 2-methoxy-6-(all-trans-polyprenyl)benzene-1,4-diol + S-adenosyl-L-methionine = a 5-methoxy-2-methyl-3-(all-trans-polyprenyl)benzene-1,4-diol + S-adenosyl-L-homocysteine + H(+). Its pathway is quinol/quinone metabolism; menaquinone biosynthesis; menaquinol from 1,4-dihydroxy-2-naphthoate: step 2/2. The protein operates within cofactor biosynthesis; ubiquinone biosynthesis. Methyltransferase required for the conversion of demethylmenaquinol (DMKH2) to menaquinol (MKH2) and the conversion of 2-polyprenyl-6-methoxy-1,4-benzoquinol (DDMQH2) to 2-polyprenyl-3-methyl-6-methoxy-1,4-benzoquinol (DMQH2). The polypeptide is Ubiquinone/menaquinone biosynthesis C-methyltransferase UbiE (Cellvibrio japonicus (strain Ueda107) (Pseudomonas fluorescens subsp. cellulosa)).